The sequence spans 434 residues: Glutamate-1-semialdehyde 2,1-aminomutase (434 aa).

Lysine 267 carries the N6-(pyridoxal phosphate)lysine modification.

Belongs to the class-III pyridoxal-phosphate-dependent aminotransferase family. HemL subfamily. Homodimer. It depends on pyridoxal 5'-phosphate as a cofactor.

Its subcellular location is the cytoplasm. The enzyme catalyses (S)-4-amino-5-oxopentanoate = 5-aminolevulinate. Its pathway is porphyrin-containing compound metabolism; protoporphyrin-IX biosynthesis; 5-aminolevulinate from L-glutamyl-tRNA(Glu): step 2/2. It participates in porphyrin-containing compound metabolism; chlorophyll biosynthesis. This Roseiflexus castenholzii (strain DSM 13941 / HLO8) protein is Glutamate-1-semialdehyde 2,1-aminomutase.